Consider the following 886-residue polypeptide: Leucine-rich repeat-containing protein sog2 (886 aa).

6 LRR repeats span residues 28 to 49, 53 to 74, 76 to 97, 99 to 120, 122 to 143, and 145 to 166; these read NALTLDLSHLNLRELPYEQLER, RIARLALGHNFIKSIGPEILKF, RLRYLNIRSNVLREFPESLCRL, SLEILDISRNKIKQLPESFGAL, NLKVLSISKNRLFELPTYIAHM, and NLEILKIENNHIVFPPPHIANN. Disordered regions lie at residues 236–288, 301–364, 394–431, and 455–483; these read SPGM…THPP, SPRQ…ASPI, PTQLSASAKTSAISLPEVAKKERNRSNSTNDDYSSTRL, and RIFAQDPHPSPRLKKEETHENGSNLTNDS. Positions 243 to 277 are enriched in polar residues; that stretch reads VTPSPHSHSPAGHQQSTPKSTLSKTNENSEGTLYD. The residue at position 301 (S301) is a Phosphoserine. Composition is skewed to polar residues over residues 312 to 347, 394 to 406, and 419 to 431; these read SLATGLNSPSVSKPPSSATGPLYHSPQSSLTNSSVA, PTQLSASAKTSAI, and SNSTNDDYSSTRL. At S464 the chain carries Phosphoserine.

Its subcellular location is the cytoplasm. It localises to the nucleus. This Schizosaccharomyces pombe (strain 972 / ATCC 24843) (Fission yeast) protein is Leucine-rich repeat-containing protein sog2.